A 140-amino-acid polypeptide reads, in one-letter code: Callisulfakinin (140 aa).

The first 30 residues, Met1–Ala30, serve as a signal peptide directing secretion. Residues Arg31 to Lys109 constitute a propeptide that is removed on maturation. A Sulfotyrosine modification is found at Tyr114. Phe119 carries the post-translational modification Phenylalanine amide. Position 131 is a sulfotyrosine (Tyr131). Phenylalanine amide is present on Phe136. The propeptide occupies Ser139–Ile140.

The protein belongs to the gastrin/cholecystokinin family. In brain, it is specifically expressed in four pairs of neurons. Not expressed in other cells of the brain and in the thoracico-abdominal ganglion.

It localises to the secreted. Its function is as follows. Callisulfakinin I is a neuropeptide. The existence of Callisulfakinin II is uncertain. The sequence is that of Callisulfakinin from Calliphora vomitoria (Blue bottle fly).